Consider the following 170-residue polypeptide: Large ribosomal subunit protein uL5 (170 aa).

It belongs to the universal ribosomal protein uL5 family. Part of the 50S ribosomal subunit; contacts the 5S rRNA and probably tRNA. Forms a bridge to the 30S subunit in the 70S ribosome.

Functionally, this is one of the proteins that bind and probably mediate the attachment of the 5S RNA into the large ribosomal subunit, where it forms part of the central protuberance. In the 70S ribosome it contacts protein S13 of the 30S subunit (bridge B1b), connecting the 2 subunits; this bridge is implicated in subunit movement. May contact the P site tRNA; the 5S rRNA and some of its associated proteins might help stabilize positioning of ribosome-bound tRNAs. The protein is Large ribosomal subunit protein uL5 of Methanobrevibacter smithii (strain ATCC 35061 / DSM 861 / OCM 144 / PS).